The primary structure comprises 99 residues: Prostate and testis expressed protein 14 (99 aa).

An N-terminal signal peptide occupies residues 1 to 21; that stretch reads MGKNILLLLLGLSFVIGFLQA. A UPAR/Ly6 domain is found at 22–99; it reads LRCLECDMLN…CHDQSLCNEF (78 aa). 5 disulfides stabilise this stretch: cysteine 24-cysteine 51, cysteine 27-cysteine 36, cysteine 43-cysteine 69, cysteine 73-cysteine 89, and cysteine 90-cysteine 96. An N-linked (GlcNAc...) asparagine glycan is attached at asparagine 40. N-linked (GlcNAc...) asparagine glycans are attached at residues asparagine 75 and asparagine 82.

Belongs to the PATE family. In terms of assembly, monomer.

The protein resides in the secreted. The sequence is that of Prostate and testis expressed protein 14 from Rattus norvegicus (Rat).